Here is a 62-residue protein sequence, read N- to C-terminus: Large ribosomal subunit protein bL28 (62 aa).

The protein belongs to the bacterial ribosomal protein bL28 family.

In Carboxydothermus hydrogenoformans (strain ATCC BAA-161 / DSM 6008 / Z-2901), this protein is Large ribosomal subunit protein bL28.